Reading from the N-terminus, the 267-residue chain is Myxobacterial hemagglutinin (267 aa).

4 repeat units span residues 1–66 (MAAY…GTLS), 67–133 (SANN…SEVT), 134–200 (DGDT…GTLT), and 201–267 (SPDT…ARLG). Residues 1-267 (MAAYLVQNQW…GPIGFRARLG (267 aa)) form a 4 X 65 AA tandem repeats region.

The protein belongs to the bacterial lectin family.

Its function is as follows. This lectin might have a role in the differentiation of cells. This is Myxobacterial hemagglutinin (mbhA) from Myxococcus xanthus.